The following is a 297-amino-acid chain: Heme A synthase (297 aa).

Residues M1–K6 lie on the Cytoplasmic side of the membrane. A helical membrane pass occupies residues I7–T27. Topologically, residues K28 to R62 are extracellular. A disulfide bridge connects residues C35 and C42. Residue E58 is part of the active site. A heme o-binding site is contributed by H61. Residues I63 to L83 traverse the membrane as a helical segment. The Cytoplasmic portion of the chain corresponds to K84–S93. The chain crosses the membrane as a helical span at residues F94–G114. Residues Q115–A118 are Extracellular-facing. A helical transmembrane segment spans residues I119–I139. H123 lines the heme o pocket. Topologically, residues L140–R156 are cytoplasmic. Residues G157–A177 traverse the membrane as a helical segment. At Y178 to Y210 the chain is on the extracellular side. A disulfide bond links C188 and C194. Residues F211 to L231 form a helical membrane-spanning segment. H212 contributes to the heme b binding site. Residues S232 to W242 are Cytoplasmic-facing. The helical transmembrane segment at T243 to F263 threads the bilayer. At T264–G271 the chain is on the extracellular side. The chain crosses the membrane as a helical span at residues L272–I292. H274 is a binding site for heme b. Residues T293–H297 lie on the Cytoplasmic side of the membrane.

The protein belongs to the COX15/CtaA family. Type 1 subfamily. In terms of assembly, interacts with CtaB. It depends on heme b as a cofactor.

The protein localises to the cell membrane. It carries out the reaction Fe(II)-heme o + 2 A + H2O = Fe(II)-heme a + 2 AH2. It functions in the pathway porphyrin-containing compound metabolism; heme A biosynthesis; heme A from heme O: step 1/1. Functionally, catalyzes the conversion of heme O to heme A by two successive hydroxylations of the methyl group at C8. The first hydroxylation forms heme I, the second hydroxylation results in an unstable dihydroxymethyl group, which spontaneously dehydrates, resulting in the formyl group of heme A. This is Heme A synthase from Alkalihalophilus pseudofirmus (strain ATCC BAA-2126 / JCM 17055 / OF4) (Bacillus pseudofirmus).